We begin with the raw amino-acid sequence, 839 residues long: Autophagy-related protein 9A (839 aa).

The segment at 1–20 (MAQFDTEYQRLEASYSDSPP) is disordered. An N-acetylalanine modification is found at Ala2. At 2 to 61 (AQFDTEYQRLEASYSDSPPGEEDLLVHVAEGSKSPWHHIENLDLFFSRVYNLHQKNGFTC) the chain is on the cytoplasmic side. Residues 8–11 (YQRL) carry the Tyrosine-based sorting signal motif. Phosphoserine is present on residues Ser14, Ser16, and Ser18. A helical transmembrane segment spans residues 62 to 84 (MLIGEIFELMQFLFVVAFTTFLV). The Lumenal segment spans residues 85 to 128 (SCVDYDILFANKMVNHSLHPTEPVKVTLPDAFLPAQVCSARIQE). N-linked (GlcNAc...) asparagine glycosylation occurs at Asn99. A helical transmembrane segment spans residues 129–154 (NGSLITILVIAGVFWIHRLIKFIYNI). Residues 155 to 290 (CCYWEIHSFY…ELAQRLSNRI (136 aa)) are Cytoplasmic-facing. The stretch at 291-301 (LWIGIANFLLC) is an intramembrane region. Residues 302–319 (PLILIWQILYAFFSYAEV) are Cytoplasmic-facing. The stretch at 320-328 (LKREPGALG) is an intramembrane region. Topologically, residues 329–371 (ARCWSLYGRCYLRHFNELEHELQSRLNRGYKPASKYMNCFLSP) are cytoplasmic. The helical transmembrane segment at 372–397 (LLTLLAKNGAFFAGSILAVLIALTIY) threads the bilayer. Topologically, residues 398–406 (DEDVLAVEH) are lumenal. A helical membrane pass occupies residues 407 to 424 (VLTTVTLLGVTVTVCRSF). The Cytoplasmic portion of the chain corresponds to 425-470 (IPDQHMVFCPEQLLRVILAHIHYMPDHWQGNAHRSQTRDEFAQLFQ). Residues 471–480 (YKAVFILEEL) lie within the membrane without spanning it. Topologically, residues 481 to 483 (LSP) are cytoplasmic. Residues 484–492 (IVTPLILIF) lie within the membrane without spanning it. At 493-839 (CLRPRALEII…DELPPQVHKV (347 aa)) the chain is on the cytoplasmic side. 5 positions are modified to phosphoserine: Ser656, Ser735, Ser738, Ser741, and Ser828. Disordered regions lie at residues 656 to 686 (SPLQ…SSGS) and 719 to 839 (QQAQ…VHKV). Residues 724-736 (EPERHLWHRRESD) are compositionally biased toward basic and acidic residues. Composition is skewed to acidic residues over residues 737–747 (ESGESAPDEGG) and 823–832 (VPEEGSEDEL).

Belongs to the ATG9 family. Homotrimer; forms a homotrimer with a central pore that forms a path between the two membrane leaflets. Interacts (via cytoplasmic its C-terminus) with ATG2A. Interacts with SUPT20H. Interacts (via the tyrosine-based sorting signal motif) with AP4M1; promoting association with the AP-4 complex. Interacts with ARFIP1 and ARFIP2. Interacts with PI4K2A and PI4KB. Interacts with ATG4A; the interaction is direct and promotes ATG9A trafficking. In terms of processing, ufmylated in a DDRGK1 dependent manner.

Its subcellular location is the preautophagosomal structure membrane. The protein resides in the cytoplasmic vesicle. The protein localises to the autophagosome membrane. It is found in the golgi apparatus. It localises to the trans-Golgi network membrane. Its subcellular location is the late endosome membrane. The protein resides in the recycling endosome membrane. The protein localises to the endoplasmic reticulum membrane. It is found in the mitochondrion membrane. It catalyses the reaction a 1,2-diacyl-sn-glycero-3-phosphocholine(in) = a 1,2-diacyl-sn-glycero-3-phosphocholine(out). The enzyme catalyses a 1,2-diacyl-sn-glycero-3-phospho-L-serine(in) = a 1,2-diacyl-sn-glycero-3-phospho-L-serine(out). The catalysed reaction is a 1,2-diacyl-sn-glycero-3-phosphoethanolamine(in) = a 1,2-diacyl-sn-glycero-3-phosphoethanolamine(out). Functionally, phospholipid scramblase involved in autophagy by mediating autophagosomal membrane expansion. Cycles between the preautophagosomal structure/phagophore assembly site (PAS) and the cytoplasmic vesicle pool and supplies membrane for the growing autophagosome. Lipid scramblase activity plays a key role in preautophagosomal structure/phagophore assembly by distributing the phospholipids that arrive through ATG2 (ATG2A or ATG2B) from the cytoplasmic to the luminal leaflet of the bilayer, thereby driving autophagosomal membrane expansion. Also required to supply phosphatidylinositol 4-phosphate to the autophagosome initiation site by recruiting the phosphatidylinositol 4-kinase beta (PI4KB) in a process dependent on ARFIP2, but not ARFIP1. In addition to autophagy, also plays a role in necrotic cell death. The sequence is that of Autophagy-related protein 9A from Pongo abelii (Sumatran orangutan).